We begin with the raw amino-acid sequence, 485 residues long: Protein adenylyltransferase Fic (485 aa).

Residues 21–43 (YRFVLFFIAGSLAAFAFHALTSS) form a helical membrane-spanning segment. 2 TPR repeats span residues 107–140 (AMGA…APKH) and 141–175 (PEVL…SPSN). An Inhibitory (S/T)XXXE(G/N) motif motif is present at residues 232-237 (SVGIEG). ATP contacts are provided by residues glutamate 236 and 317–320 (VGGH). Residues 286 to 421 (ITLKDILELH…IRPFVRFIAD (136 aa)) form the Fido domain. Histidine 364 is an active-site residue. Residues 368-375 (DGNGRTSR), 400-401 (YY), and asparagine 408 contribute to the ATP site.

Belongs to the fic family. Homodimer.

It localises to the membrane. The enzyme catalyses L-tyrosyl-[protein] + ATP = O-(5'-adenylyl)-L-tyrosyl-[protein] + diphosphate. It catalyses the reaction L-threonyl-[protein] + ATP = 3-O-(5'-adenylyl)-L-threonyl-[protein] + diphosphate. It carries out the reaction 3-O-(5'-adenylyl)-L-threonyl-[protein] + H2O = L-threonyl-[protein] + AMP + H(+). Its activity is regulated as follows. The side chain of Glu-236 determines which of the two opposing activities (AMPylase or de-AMPylase) will take place. In response to endoplasmic reticulum stress, mediates de-AMPylase activity. Adenylyltransferase activity is inhibited by the inhibitory helix present at the N-terminus: Glu-236 binds ATP and competes with ATP-binding at Arg-375, thereby preventing adenylyltransferase activity. In unstressed cells, disengagement of Glu-236 promotes adenylyltransferase activity. Activation dissociates ATP-binding from Glu-236, allowing ordered binding of the entire ATP moiety with the alpha-phosphate in an orientation that is productive for accepting an incoming target hydroxyl side chain. In terms of biological role, protein that can both mediate the addition of adenosine 5'-monophosphate (AMP) to specific residues of target proteins (AMPylation), and the removal of the same modification from target proteins (de-AMPylation), depending on the context. The side chain of Glu-236 determines which of the two opposing activities (AMPylase or de-AMPylase) will take place. Acts as a key regulator of the unfolded protein response (UPR) by mediating AMPylation or de-AMPylation of Hsc70-3/BiP. In unstressed cells, acts as an adenylyltransferase by mediating AMPylation of Hsc70-3/BiP at 'Thr-518', thereby inactivating it. In response to endoplasmic reticulum stress, acts as a phosphodiesterase by mediating removal of ATP (de-AMPylation) from Hsc70-3/BiP at 'Thr-518', leading to restore HSPA5/BiP activity. The polypeptide is Protein adenylyltransferase Fic (Drosophila virilis (Fruit fly)).